Consider the following 143-residue polypeptide: Ninjurin-2 (143 aa).

Over 1-61 the chain is Extracellular; that stretch reads MESDRETIHL…KSVLQQGPFA (61 aa). The segment at 26 to 38 is helix alpha1; sequence NFYATKKSVAESM. Residues 39–58 form a helix alpha2 region; that stretch reads LDVALFMSNAMRLKSVLQQG. A helical transmembrane segment spans residues 62–93; it reads EYYTTLVTLIIVSLLLQVVISLLLVFIAILNL. The Cytoplasmic segment spans residues 94–97; sequence NEVE. The chain crosses the membrane as a helical span at residues 98–127; that stretch reads NQRHLNKLNNAATILVFITVVINIFITAFG. A cholesterol-binding site is contributed by Lys104. The Extracellular segment spans residues 128–143; the sequence is AHHAASMAARTSSNPI.

It belongs to the ninjurin family. Homooligomer; in response to stimuli, homooligomerizes into filaments. In contrast to NINJ1, the filament is curved toward the intracellular space, preventing its circularization on a relatively flat membrane to mediate plasma membrane rupture: curvature is caused by cholesterol-binding at the cytoplasmic leaflet.

The protein resides in the cell membrane. Its function is as follows. Its role in unclear. In contrast to NINJ1 paralog, does not mediate plasma membrane rupture (cytolysis) downstream of necroptotic and pyroptotic programmed cell death. While it is able to oligomerize and form filaments, filaments are curved toward the intracellular space, preventing circularization to mediate plasma membrane rupture. May act as a homophilic transmembrane adhesion molecule involved in nerve regeneration. Promotes axonal growth. This Mus musculus (Mouse) protein is Ninjurin-2 (Ninj2).